The following is a 90-amino-acid chain: Small ribosomal subunit protein uS17 (90 aa).

The protein belongs to the universal ribosomal protein uS17 family. In terms of assembly, part of the 30S ribosomal subunit.

Its function is as follows. One of the primary rRNA binding proteins, it binds specifically to the 5'-end of 16S ribosomal RNA. The protein is Small ribosomal subunit protein uS17 of Burkholderia thailandensis (strain ATCC 700388 / DSM 13276 / CCUG 48851 / CIP 106301 / E264).